Consider the following 587-residue polypeptide: Probable intramembrane protease YKL100C (587 aa).

The Lumenal portion of the chain corresponds to 1–85 (MDKYLNSFVD…HSLVFNYATL (85 aa)). The helical transmembrane segment at 86–106 (VLIASALVVIGSFTSISSIPF) threads the bilayer. The Cytoplasmic segment spans residues 107 to 156 (TALPPTREHSLFDPTDFDVDHDCHVIYRENDEDKKKKKKSKRFFDMMDEK). A helical transmembrane segment spans residues 157-177 (HAIILPLTSGCTLLALYFVIK). The Lumenal segment spans residues 178–192 (KLHLNWLKYVVKILN). A helical transmembrane segment spans residues 193-213 (FNITLLNIPAGTFVYSYFLNS). Residues 214 to 303 (LFRNLSHLAS…KSKRQISNMY (90 aa)) are Cytoplasmic-facing. The chain crosses the membrane as a helical span at residues 304–324 (LNSALIVSFVLSIVSTVYFYL). Residues 325 to 328 (SPND) lie on the Lumenal side of the membrane. Residues 329 to 349 (WLISNAVSMNMAIWSIAQLKL) traverse the membrane as a helical segment. Residues 350–351 (KN) lie on the Cytoplasmic side of the membrane. Residues 352–372 (LKSGALILIALFFYDICFVFG) traverse the membrane as a helical segment. Residue Asp-366 is part of the active site. The Lumenal segment spans residues 373–401 (TDVMVTVATNLDIPVKLSLPVKFNTAQNN). The chain crosses the membrane as a helical span at residues 402–422 (FNFSILGLGDIALPGMFIAMC). Asp-411 is a catalytic residue. Over 423–450 (YKYDIWKWHLDHDDTEFHFLNWSYVGKY) the chain is Cytoplasmic. A helical transmembrane segment spans residues 451-471 (FITAMVSYVASLVSAMVSLSI). At 472 to 475 (FNTA) the chain is on the lumenal side. Residues 476 to 496 (QPALLYIVPSLLISTILVACW) form a helical membrane-spanning segment. Residues 477–479 (PAL) carry the PAL motif. The Cytoplasmic portion of the chain corresponds to 497–587 (NKDFKQFWNF…EEDLLDDESS (91 aa)). A disordered region spans residues 561-587 (EFVQEEDLSDSSEEELSEEDLLDDESS).

The protein belongs to the peptidase A22B family.

It is found in the membrane. The protein localises to the endoplasmic reticulum membrane. Functionally, may act as intramembrane protease. The sequence is that of Probable intramembrane protease YKL100C from Saccharomyces cerevisiae (strain ATCC 204508 / S288c) (Baker's yeast).